The primary structure comprises 253 residues: 1-(5-phosphoribosyl)-5-[(5-phosphoribosylamino)methylideneamino] imidazole-4-carboxamide isomerase (253 aa).

The active-site Proton acceptor is the aspartate 8. Catalysis depends on aspartate 129, which acts as the Proton donor.

Belongs to the HisA/HisF family.

Its subcellular location is the cytoplasm. It carries out the reaction 1-(5-phospho-beta-D-ribosyl)-5-[(5-phospho-beta-D-ribosylamino)methylideneamino]imidazole-4-carboxamide = 5-[(5-phospho-1-deoxy-D-ribulos-1-ylimino)methylamino]-1-(5-phospho-beta-D-ribosyl)imidazole-4-carboxamide. The protein operates within amino-acid biosynthesis; L-histidine biosynthesis; L-histidine from 5-phospho-alpha-D-ribose 1-diphosphate: step 4/9. This Microcystis aeruginosa (strain NIES-843 / IAM M-2473) protein is 1-(5-phosphoribosyl)-5-[(5-phosphoribosylamino)methylideneamino] imidazole-4-carboxamide isomerase.